The chain runs to 211 residues: MPDSINNGHKESHDHRISNDAEMITDEKWQAIINNDAAYNNQFFYAVKSTGIFCKPSCKSRVPKKENVCIFPNTEQALRANFRPCKRCKPTNEKMPDSEWVDLITEYIDKNFTEKLTLESLADICHGSPYHMHRTFKKIKGITLVEYIQQVRVHAAKKYLIQTNKAIGDIAICVGIANAPYFITLFKKKTGQTPARFRQMSKMEETYNGNK.

The active-site Nucleophile; methyl group acceptor from methylphosphotriester is cysteine 54. Zn(2+) contacts are provided by cysteine 54, cysteine 58, cysteine 85, and cysteine 88. In terms of domain architecture, HTH araC/xylS-type spans 102-200 (DLITEYIDKN…GQTPARFRQM (99 aa)). A DNA-binding region (H-T-H motif) is located at residues 119–140 (ESLADICHGSPYHMHRTFKKIK).

The cofactor is Zn(2+).

The catalysed reaction is (2'-deoxyribonucleoside 5'-methylphosphotriester)-DNA + L-cysteinyl-[protein] = 2'-deoxyribonucleotide-DNA + S-methyl-L-cysteinyl-[protein] + H(+). In terms of biological role, is involved in the adaptive response to alkylation damage in DNA caused by alkylating agents. Repairs the methylphosphotriester lesions in DNA by a direct and irreversible transfer of the methyl group to one of its own cysteine residues. Its function is as follows. The methylation of AdaA by methylphosphotriesters in DNA leads to its activation as a transcriptional regulator that activates the transcription of the ada operon which consists of adaA and adaB, and of the adjacent gene alkA. In Bacillus subtilis (strain 168), this protein is Bifunctional transcriptional activator/DNA repair enzyme AdaA (adaA).